The chain runs to 1066 residues: Zinc finger and BTB domain-containing protein 21 (1066 aa).

One can recognise a BTB domain in the interval 30–96 (CDVLLIVGDQ…IYSSSLFVEK (67 aa)). Positions 30 to 96 (CDVLLIVGDQ…IYSSSLFVEK (67 aa)) are mediates homodimerization. Residue Lys-40 forms a Glycyl lysine isopeptide (Lys-Gly) (interchain with G-Cter in SUMO1); alternate linkage. Residue Lys-40 forms a Glycyl lysine isopeptide (Lys-Gly) (interchain with G-Cter in SUMO2); alternate linkage. A compositionally biased stretch (polar residues) spans 154–177 (SRNEAQGKTVSQNQPDVSHTSRPS). A disordered region spans residues 154–196 (SRNEAQGKTVSQNQPDVSHTSRPSPSIAVKANTNKPHVPKPIE). Glycyl lysine isopeptide (Lys-Gly) (interchain with G-Cter in SUMO2) cross-links involve residues Lys-255, Lys-266, Lys-273, Lys-312, and Lys-337. A phosphoserine mark is found at Ser-345 and Ser-381. Residue Lys-383 forms a Glycyl lysine isopeptide (Lys-Gly) (interchain with G-Cter in SUMO2) linkage. The segment covering 388 to 399 (DCSEKTALDDRP) has biased composition (basic and acidic residues). Disordered regions lie at residues 388–442 (DCSE…DPSD), 454–485 (TAAA…AKRR), and 498–525 (KVNE…ADFP). 2 positions are modified to phosphoserine: Ser-411 and Ser-422. Residue Lys-430 forms a Glycyl lysine isopeptide (Lys-Gly) (interchain with G-Cter in SUMO2) linkage. At Thr-431 the chain carries Phosphothreonine. Ser-434, Ser-435, and Ser-438 each carry phosphoserine. A compositionally biased stretch (basic and acidic residues) spans 466–478 (LSLKTEDDQKDMS). Residues Lys-469 and Lys-475 each participate in a glycyl lysine isopeptide (Lys-Gly) (interchain with G-Cter in SUMO2) cross-link. 2 C2H2-type zinc fingers span residues 546 to 569 (FKCK…NMYH) and 575 to 598 (YACD…QTQH). The residue at position 605 (Ser-605) is a Phosphoserine. Residues Lys-617, Lys-643, and Lys-659 each participate in a glycyl lysine isopeptide (Lys-Gly) (interchain with G-Cter in SUMO2) cross-link. Residues 670 to 692 (YICTYCGKAYRFLSQFKQHIKMH) form a C2H2-type 3 zinc finger. Residue Lys-702 forms a Glycyl lysine isopeptide (Lys-Gly) (interchain with G-Cter in SUMO2) linkage. A Phosphoserine modification is found at Ser-714. Residues 748 to 770 (AVCPYCSLRFFSPELKQEHESKC) form a C2H2-type 4; atypical zinc finger. Residues Lys-763 and Lys-785 each participate in a glycyl lysine isopeptide (Lys-Gly) (interchain with G-Cter in SUMO2) cross-link. The C2H2-type 5 zinc-finger motif lies at 775–798 (LTCLECMRTFKSSFSIWRHQVEVH). Residues 806-840 (TENFSLPVLDHNGDVTGSSRPQSQPEPNKVNHIVT) are disordered. Polar residues predominate over residues 820–831 (VTGSSRPQSQPE). Residue Lys-875 forms a Glycyl lysine isopeptide (Lys-Gly) (interchain with G-Cter in SUMO2) linkage. A Glycyl lysine isopeptide (Lys-Gly) (interchain with G-Cter in SUMO1); alternate cross-link involves residue Lys-879. Residue Lys-879 forms a Glycyl lysine isopeptide (Lys-Gly) (interchain with G-Cter in SUMO2); alternate linkage. Positions 879–906 (KEEPVEEAEEEAPEASTAPKEAGPSKEA) are disordered. Residues 882 to 891 (PVEEAEEEAP) are compositionally biased toward acidic residues. A C2H2-type 6; atypical zinc finger spans residues 909-932 (WPCEKCGKMFTVHKQLERHQELLC). A Glycyl lysine isopeptide (Lys-Gly) (interchain with G-Cter in SUMO2) cross-link involves residue Lys-935. The segment at 937–959 (FICHVCNKAFRTNFRLWSHFQSH) adopts a C2H2-type 7 zinc-finger fold. The interval 963–1014 (ASEESAHKESEVCPVPTNSPSPPPLPPPPPLPKIQPLEPDSPTGLSENPTPA) is disordered. The span at 979–995 (TNSPSPPPLPPPPPLPK) shows a compositional bias: pro residues. Residue Ser-1003 is modified to Phosphoserine. The C2H2-type 8 zinc-finger motif lies at 1043–1065 (FMCKLCHRTFKTAFSLWSHEQTH).

In terms of assembly, homodimer. Interacts with ZBTB14. Ubiquitous in fetal and adult tissues.

It localises to the nucleus. Its function is as follows. Acts as a transcription repressor. The sequence is that of Zinc finger and BTB domain-containing protein 21 (ZBTB21) from Homo sapiens (Human).